The sequence spans 216 residues: MPIGVPKVPYRIPGDEEATWVDLYNVMYRERTLFLGQEIRCEITNHITGLMVYLSIEDGNSDIFLFINSPGGWLISGMAIFDTMQTVTPDIYTICLGIAASMASFILLGGEPTKRIAFPHARIMLHQPASAYYRARTPEFLLEVEELHKVREMITRVYALRTGKPFWVVSEDMERDVFMSADEAKAYGLVDIVGDEMIDEHCDTDPVWFPEMFKDW.

Ser-101 functions as the Nucleophile in the catalytic mechanism. The active site involves His-126.

This sequence belongs to the peptidase S14 family. As to quaternary structure, component of the chloroplastic Clp protease core complex.

It localises to the plastid. It is found in the chloroplast stroma. It catalyses the reaction Hydrolysis of proteins to small peptides in the presence of ATP and magnesium. alpha-casein is the usual test substrate. In the absence of ATP, only oligopeptides shorter than five residues are hydrolyzed (such as succinyl-Leu-Tyr-|-NHMec, and Leu-Tyr-Leu-|-Tyr-Trp, in which cleavage of the -Tyr-|-Leu- and -Tyr-|-Trp bonds also occurs).. Its function is as follows. Cleaves peptides in various proteins in a process that requires ATP hydrolysis. Has a chymotrypsin-like activity. Plays a major role in the degradation of misfolded proteins. The protein is ATP-dependent Clp protease proteolytic subunit of Saccharum hybrid (Sugarcane).